Consider the following 85-residue polypeptide: Protein Vpu (85 aa).

Residues 1-7 lie on the Extracellular side of the membrane; it reads MHHRDLL. The helical transmembrane segment at 8-28 threads the bilayer; the sequence is AIIIISALLFINVILWGFILR. Residues 29–85 are Cytoplasmic-facing; it reads KYLEQKEQDRKEREILERLRRIREIRDDSDYESNGEEEQEVMDLVLSHGFDNPMFEP.

Belongs to the HIV-1 VPU protein family. Homopentamer. Interacts with host CD4 and BRTC; these interactions induce proteasomal degradation of CD4. Interacts with host BST2; this interaction leads to the degradation of host BST2. Interacts with host FBXW11. Interacts with host AP1M1; this interaction plays a role in the mistrafficking and subsequent degradation of host BST2. Interacts with host RANBP2; this interaction allows Vpu to down-regulate host BLM sumoylation. In terms of processing, phosphorylated by host CK2. This phosphorylation is necessary for interaction with human BTRC and degradation of CD4.

The protein resides in the host membrane. Ion channel activity is inhibited by hexamethylene amiloride in vitro. Functionally, enhances virion budding by targeting host CD4 and Tetherin/BST2 to proteasome degradation. Degradation of CD4 prevents any unwanted premature interactions between viral Env and its host receptor CD4 in the endoplasmic reticulum. Degradation of antiretroviral protein Tetherin/BST2 is important for virion budding, as BST2 tethers new viral particles to the host cell membrane. Mechanistically, Vpu bridges either CD4 or BST2 to BTRC, a substrate recognition subunit of the Skp1/Cullin/F-box protein E3 ubiquitin ligase, induces their ubiquitination and subsequent proteasomal degradation. The alteration of the E3 ligase specificity by Vpu seems to promote the degradation of host IKBKB, leading to NF-kappa-B down-regulation and subsequent apoptosis. Acts as a viroporin that forms an oligomeric ion channel in membranes. Modulates the host DNA repair mechanisms to promote degradation of nuclear viral cDNA in cells that are already productively infected in order to suppress immune sensing and proviral hyper-integration (superinfection). Manipulates PML-NBs and modulates SUMOylation of host BLM protein thereby enhancing its DNA-end processing activity toward viral unintegrated linear DNA. Also inhibits RAD52-mediated homologous repair of viral cDNA, preventing the generation of dead-end circular forms of single copies of the long terminal repeat and permitting sustained nucleolytic attack. The chain is Protein Vpu from Human immunodeficiency virus type 1 group O (isolate ANT70) (HIV-1).